A 307-amino-acid polypeptide reads, in one-letter code: Ribosomal protein L11 methyltransferase (307 aa).

The S-adenosyl-L-methionine site is built by Thr-144, Gly-165, Asp-187, and Asn-235.

This sequence belongs to the methyltransferase superfamily. PrmA family.

It is found in the cytoplasm. The catalysed reaction is L-lysyl-[protein] + 3 S-adenosyl-L-methionine = N(6),N(6),N(6)-trimethyl-L-lysyl-[protein] + 3 S-adenosyl-L-homocysteine + 3 H(+). Functionally, methylates ribosomal protein L11. This Psychrobacter sp. (strain PRwf-1) protein is Ribosomal protein L11 methyltransferase.